The chain runs to 477 residues: Monocarboxylate transporter 12-B (477 aa).

At 1 to 9 the chain is on the cytoplasmic side; that stretch reads MAQEKKKGG. The next 12 helical transmembrane spans lie at 10-30, 58-78, 86-106, 116-136, 148-168, 178-198, 253-273, 289-309, 320-340, 344-364, 383-403, and 413-433; these read VLPP…VVTV, AWIH…GSLI, IAVI…SFAT, GLLT…MVGI, IAMS…QLLI, LILG…RPII, FLVL…PFVY, AFLM…FGWL, NICY…IPLL, VWLV…VALI, VVYF…GWLV, and FFLS…VAII. Residues 434-477 are Cytoplasmic-facing; the sequence is RYCQRNQKKNSLSKIPKLVSCEGKQVDYYPPKNKDLMLIIPATS.

This sequence belongs to the major facilitator superfamily. Monocarboxylate porter (TC 2.A.1.13) family.

Its subcellular location is the cell membrane. It is found in the basolateral cell membrane. It catalyses the reaction creatine(in) = creatine(out). The catalysed reaction is guanidinoacetate(in) = guanidinoacetate(out). In terms of biological role, functions as a transporter for creatine and as well for its precursor guanidinoacetate. Transport of creatine and GAA is independent of resting membrane potential and extracellular Na(+), Cl(-), or pH. Contributes to the process of creatine biosynthesis and distribution. The polypeptide is Monocarboxylate transporter 12-B (slc16a12b) (Danio rerio (Zebrafish)).